We begin with the raw amino-acid sequence, 387 residues long: Probable NADH-dependent butanol dehydrogenase 1 (387 aa).

It belongs to the iron-containing alcohol dehydrogenase family.

It participates in alcohol metabolism; butanol biosynthesis. This Bacillus subtilis (strain 168) protein is Probable NADH-dependent butanol dehydrogenase 1 (yugJ).